Consider the following 416-residue polypeptide: Cotranscriptional regulator ARB2A (416 aa).

The first 18 residues, 1 to 18 (MSISLSSLILLPIWINMA), serve as a signal peptide directing secretion. The tract at residues 208-247 (KPKIHVQSSSDSSDEPAEKRERKDKVSKETKKRRDFYEKY) is disordered. The span at 223–236 (PAEKRERKDKVSKE) shows a compositional bias: basic and acidic residues. Catalysis depends on S293, which acts as the Nucleophile. The Prevents secretion from ER motif lies at 413 to 416 (HEEL).

The protein belongs to the ARB2A family. As to quaternary structure, interacts with AGO2. Found in a complex, composed of AGO2, CHD7 and ARB2A.

The protein localises to the nucleus. The protein resides in the cytoplasm. Its subcellular location is the endoplasmic reticulum. Functionally, plays a role in the regulation of alternative splicing, by interacting with AGO2 and CHD7. Seems to be required for stabilizing protein-protein interactions at the chromatin-spliceosome interface. May have hydrolase activity. This is Cotranscriptional regulator ARB2A from Homo sapiens (Human).